A 392-amino-acid chain; its full sequence is L-rhamnonate dehydratase (392 aa).

Substrate contacts are provided by His-22 and Arg-48. Mg(2+) contacts are provided by Asp-214, Glu-240, and Glu-268. The Proton acceptor role is filled by His-318. Glu-338 is a substrate binding site.

The protein belongs to the mandelate racemase/muconate lactonizing enzyme family. RhamD subfamily. Homooctamer; tetramer of dimers. Mg(2+) is required as a cofactor.

It catalyses the reaction L-rhamnonate = 2-dehydro-3-deoxy-L-rhamnonate + H2O. Catalyzes the dehydration of L-rhamnonate to 2-keto-3-deoxy-L-rhamnonate (KDR). This is L-rhamnonate dehydratase from Burkholderia ambifaria (strain MC40-6).